Reading from the N-terminus, the 185-residue chain is Phosphatidylglycerophosphatase GEP4, mitochondrial (185 aa).

A Phosphoryl acceptor motif is present at residues 45 to 49; the sequence is DKDNC.

The protein belongs to the GEP4 family.

Its subcellular location is the mitochondrion inner membrane. The enzyme catalyses a 1,2-diacyl-sn-glycero-3-phospho-(1'-sn-glycero-3'-phosphate) + H2O = a 1,2-diacyl-sn-glycero-3-phospho-(1'-sn-glycerol) + phosphate. The protein operates within phospholipid metabolism; phosphatidylglycerol biosynthesis; phosphatidylglycerol from CDP-diacylglycerol: step 2/2. In terms of biological role, phosphatidylglycerophosphatase involved in the biosynthesis of cardiolipin (CL), a unique dimeric phosphoglycerolipid predominantly present in mitochondrial membranes and which has important functions for cellular energy metabolism, mitochondrial dynamics and the initiation of apoptotic pathways. Required for the stability of respiratory chain supercomplexes and for growth at elevated temperature, in presence of ethidium bromide or in absence of prohibitins. The chain is Phosphatidylglycerophosphatase GEP4, mitochondrial (GEP4) from Saccharomyces cerevisiae (strain ATCC 204508 / S288c) (Baker's yeast).